Reading from the N-terminus, the 265-residue chain is Serine protease ami (265 aa).

Positions 1–21 are cleaved as a signal peptide; sequence MNVSWALLAVVLVLTVATYEC. An N-linked (GlcNAc...) asparagine glycan is attached at Asn-2. Positions 22–26 are cleaved as a propeptide — activation peptide; the sequence is RPRGR. In terms of domain architecture, Peptidase S1 spans 27-254; that stretch reads ILGGQDSKAE…YKSWIMESMY (228 aa). A disulfide bond links Cys-52 and Cys-68. His-67 serves as the catalytic Charge relay system. Residues Asn-71, Asn-74, and Asn-108 are each glycosylated (N-linked (GlcNAc...) asparagine). Catalysis depends on Asp-115, which acts as the Charge relay system. 3 cysteine pairs are disulfide-bonded: Cys-149/Cys-215, Cys-180/Cys-196, and Cys-205/Cys-230. The Charge relay system role is filled by Ser-209. Asn-255 carries an N-linked (GlcNAc...) asparagine glycan.

It belongs to the peptidase S1 family.

It localises to the secreted. Probable serine protease. The chain is Serine protease ami from Xenopus tropicalis (Western clawed frog).